The sequence spans 450 residues: Phosphoglucosamine mutase 2 (450 aa).

Serine 101 acts as the Phosphoserine intermediate in catalysis. Mg(2+)-binding residues include serine 101, aspartate 245, aspartate 247, and aspartate 249. Serine 101 is modified (phosphoserine).

This sequence belongs to the phosphohexose mutase family. Requires Mg(2+) as cofactor. Activated by phosphorylation.

It catalyses the reaction alpha-D-glucosamine 1-phosphate = D-glucosamine 6-phosphate. Its function is as follows. Catalyzes the conversion of glucosamine-6-phosphate to glucosamine-1-phosphate. This chain is Phosphoglucosamine mutase 2, found in Shewanella sp. (strain MR-7).